The sequence spans 113 residues: Small ribosomal subunit protein uS17 (113 aa).

The protein belongs to the universal ribosomal protein uS17 family. As to quaternary structure, part of the 30S ribosomal subunit.

Functionally, one of the primary rRNA binding proteins, it binds specifically to the 5'-end of 16S ribosomal RNA. The protein is Small ribosomal subunit protein uS17 of Sulfurisphaera tokodaii (strain DSM 16993 / JCM 10545 / NBRC 100140 / 7) (Sulfolobus tokodaii).